Reading from the N-terminus, the 388-residue chain is Homeobox protein XHOX-3 (388 aa).

Disordered stretches follow at residues 30-109 (AVGS…SDFY) and 131-163 (SAGQ…FSAC). 2 stretches are compositionally biased toward polar residues: residues 68–81 (ATGQ…QLRI) and 91–103 (DSLS…SSSD). The segment at residues 168–227 (MRRYRTAFTREQIARLEKEFYRENYVSRPRRCELAAALNLPETTIKVWFQNRRMKDKRQR) is a DNA-binding region (homeobox).

This sequence belongs to the even-skipped homeobox family.

It is found in the nucleus. In terms of biological role, may be required for posterior development and development of normal embryonic axial pattern. The chain is Homeobox protein XHOX-3 (xhox3) from Xenopus laevis (African clawed frog).